Reading from the N-terminus, the 181-residue chain is Protein Syd (181 aa).

It belongs to the Syd family.

It is found in the cell inner membrane. Its function is as follows. Interacts with the SecY protein in vivo. May bind preferentially to an uncomplexed state of SecY, thus functioning either as a chelating agent for excess SecY in the cell or as a regulatory factor that negatively controls the translocase function. The sequence is that of Protein Syd from Salmonella arizonae (strain ATCC BAA-731 / CDC346-86 / RSK2980).